A 274-amino-acid polypeptide reads, in one-letter code: 2,3,4,5-tetrahydropyridine-2,6-dicarboxylate N-succinyltransferase (274 aa).

Belongs to the transferase hexapeptide repeat family.

The protein localises to the cytoplasm. The enzyme catalyses (S)-2,3,4,5-tetrahydrodipicolinate + succinyl-CoA + H2O = (S)-2-succinylamino-6-oxoheptanedioate + CoA. Its pathway is amino-acid biosynthesis; L-lysine biosynthesis via DAP pathway; LL-2,6-diaminopimelate from (S)-tetrahydrodipicolinate (succinylase route): step 1/3. The chain is 2,3,4,5-tetrahydropyridine-2,6-dicarboxylate N-succinyltransferase from Proteus mirabilis (strain HI4320).